The sequence spans 451 residues: Chromosomal replication initiator protein DnaA (451 aa).

The tract at residues 1-73 is domain I, interacts with DnaA modulators; it reads MQDNLPQIWE…SNALKQTTSK (73 aa). A domain II region spans residues 73–113; that stretch reads KNFEIRFIVPSEEKISKTEESQKKLEGSVNISVASDQFVSN. A domain III, AAA+ region region spans residues 114–330; sequence NLNPKYTFDT…GALIRIVAYS (217 aa). Positions 158, 160, 161, and 162 each coordinate ATP. Residues 331–451 form a domain IV, binds dsDNA region; the sequence is SLTNSEITVE…ERIAKEIKGD (121 aa).

The protein belongs to the DnaA family. In terms of assembly, oligomerizes as a right-handed, spiral filament on DNA at oriC.

The protein resides in the cytoplasm. Functionally, plays an essential role in the initiation and regulation of chromosomal replication. ATP-DnaA binds to the origin of replication (oriC) to initiate formation of the DNA replication initiation complex once per cell cycle. Binds the DnaA box (a 9 base pair repeat at the origin) and separates the double-stranded (ds)DNA. Forms a right-handed helical filament on oriC DNA; dsDNA binds to the exterior of the filament while single-stranded (ss)DNA is stabiized in the filament's interior. The ATP-DnaA-oriC complex binds and stabilizes one strand of the AT-rich DNA unwinding element (DUE), permitting loading of DNA polymerase. After initiation quickly degrades to an ADP-DnaA complex that is not apt for DNA replication. Binds acidic phospholipids. This chain is Chromosomal replication initiator protein DnaA, found in Alkaliphilus oremlandii (strain OhILAs) (Clostridium oremlandii (strain OhILAs)).